A 959-amino-acid chain; its full sequence is Protein NLP7 (959 aa).

Positions 1–22 (MCEPDDNSARNGVTTQPSRSRE) are disordered. Residues 9 to 18 (ARNGVTTQPS) show a composition bias toward polar residues. An RWP-RK domain is found at 578–659 (KKKTEKKRGK…IESVQGTDGG (82 aa)). A coiled-coil region spans residues 633–654 (SRKIKKVNRSITKLKRVIESVQ). Composition is skewed to polar residues over residues 673-687 (THGQTSAQPLNSPNG), 694-703 (PNTNNSPNHW), and 735-745 (GTPTSHGSCDG). The disordered stretch occupies residues 673–760 (THGQTSAQPL…PKVPNQDPLF (88 aa)). The 83-residue stretch at 863–945 (TVTIKASYKD…KIVRLLVHDV (83 aa)) folds into the PB1 domain.

Interacts with NRG2. Expressed in roots, stems, leaves, flowers and siliques. Detected in root hairs, emerging secondary roots, vascular tissues, leaf parenchyma cells and stomata.

The protein resides in the nucleus. In terms of biological role, transcription factor involved in regulation of nitrate assimilation and in transduction of the nitrate signal. The chain is Protein NLP7 (NLP7) from Arabidopsis thaliana (Mouse-ear cress).